A 475-amino-acid chain; its full sequence is Putative aldehyde dehydrogenase SERP1729 (475 aa).

201–207 (GDGSGVG) lines the NAD(+) pocket. Residues Glu245 and Cys279 contribute to the active site.

Belongs to the aldehyde dehydrogenase family.

The catalysed reaction is an aldehyde + NAD(+) + H2O = a carboxylate + NADH + 2 H(+). The chain is Putative aldehyde dehydrogenase SERP1729 from Staphylococcus epidermidis (strain ATCC 35984 / DSM 28319 / BCRC 17069 / CCUG 31568 / BM 3577 / RP62A).